The following is a 521-amino-acid chain: Small ribosomal subunit protein mL104 (rPPR9) (521 aa).

Residues 1-59 (MPPSLPSLQLRRLLLRSFISSSSVNTLQSQPRIISSKPLFSPLPPSRSSIFSTFPSRFF) constitute a mitochondrion transit peptide. PPR repeat units follow at residues 174 to 204 (GGKT…MEND), 210 to 240 (DKES…TANE), 244 to 278 (DENI…GFEI), 279 to 313 (GTKA…LLEM), 321 to 355 (NTET…GCQP), 356 to 390 (DAET…GYGE), 393 to 427 (NKKE…GCKP), and 428 to 462 (GIKT…GIAV). Positions 480-495 (EVDSNVKKRETLPEKT) are enriched in basic and acidic residues. Positions 480 to 499 (EVDSNVKKRETLPEKTARKK) are disordered. Positions 486–503 (KKRETLPEKTARKKKRLK) match the Nuclear localization signal motif.

Belongs to the PPR family. P subfamily. As to quaternary structure, interacts with NAP1;1 and TCP8. Able to bind mitochondrial RNA in vitro. Component of the mitochondrial ribosome small subunit. In terms of tissue distribution, expressed in root tips, lateral root primordia and leaf primordia. Highly detected in the mature pollen grains.

The protein resides in the mitochondrion matrix. The protein localises to the nucleus. RNA-binding protein that functions in both mitochondrion and nucleus. In mitochondrion, it is associated with polysomes and may play a role in translation. Required during embryogenesis. In nucleus, might be involved in the regulation of its own gene expression. In Arabidopsis thaliana (Mouse-ear cress), this protein is Small ribosomal subunit protein mL104 (rPPR9) (PNM1).